The following is a 156-amino-acid chain: Cyclic pyranopterin monophosphate synthase (156 aa).

Residues 75-77 and 111-112 contribute to the substrate site; these read LCH and ME. The active site involves D126.

This sequence belongs to the MoaC family. As to quaternary structure, homohexamer; trimer of dimers.

It carries out the reaction (8S)-3',8-cyclo-7,8-dihydroguanosine 5'-triphosphate = cyclic pyranopterin phosphate + diphosphate. It functions in the pathway cofactor biosynthesis; molybdopterin biosynthesis. In terms of biological role, catalyzes the conversion of (8S)-3',8-cyclo-7,8-dihydroguanosine 5'-triphosphate to cyclic pyranopterin monophosphate (cPMP). In Corynebacterium glutamicum (strain ATCC 13032 / DSM 20300 / JCM 1318 / BCRC 11384 / CCUG 27702 / LMG 3730 / NBRC 12168 / NCIMB 10025 / NRRL B-2784 / 534), this protein is Cyclic pyranopterin monophosphate synthase.